Reading from the N-terminus, the 212-residue chain is ER lumen protein-retaining receptor 1 (212 aa).

The Lumenal segment spans residues 1–4; sequence MNLF. Residues 5 to 24 form a helical membrane-spanning segment; sequence RFLGDLSHLLAIILLLLKIW. Topologically, residues 25-32 are cytoplasmic; the sequence is KSRSCAGI. A helical membrane pass occupies residues 33–52; it reads SGKSQVLFAVVFTARYLDLF. The interaction with the K-D-E-L motif on target proteins stretch occupies residues 47–48; the sequence is RY. The Lumenal segment spans residues 53-58; that stretch reads TNYISL. Residues 59-79 form a helical membrane-spanning segment; sequence YNTCMKVVYIACSFTTVWMIY. The Cytoplasmic segment spans residues 80–92; the sequence is SKFKATYDGNHDT. A helical membrane pass occupies residues 93 to 110; that stretch reads FRVEFLVVPTAVLAFLVN. Residues 111–116 lie on the Lumenal side of the membrane; the sequence is HDFTPL. The chain crosses the membrane as a helical span at residues 117–135; that stretch reads EILWTFSIYLESVAILPQL. Residues 136-149 are Cytoplasmic-facing; that stretch reads FMVSKTGEAETITS. The helical transmembrane segment at 150 to 168 threads the bilayer; the sequence is HYLFALGVYRTLYLFNWIW. Residues 159 to 169 are interaction with the K-D-E-L motif on target proteins; the sequence is RTLYLFNWIWR. Residues 169 to 178 are Lumenal-facing; that stretch reads RYHFEGFFDL. A helical membrane pass occupies residues 179 to 199; the sequence is IAIVAGLVQTVLYCDFFYLYI. At 200 to 212 the chain is on the cytoplasmic side; that stretch reads TKVLKGKKLSLPA. The tract at residues 204–207 is important for recycling of cargo proteins with the sequence motif K-D-E-L from the Golgi to the endoplasmic reticulum; that stretch reads KGKK. The residue at position 209 (Ser209) is a Phosphoserine; by PKA.

Belongs to the ERD2 family. As to quaternary structure, upon ligand binding the receptor oligomerizes and interacts with components of the transport machinery such as ARFGAP1 and ARF1. Phosphorylation by PKA at Ser-209 is required for endoplasmic reticulum retention function.

It localises to the golgi apparatus membrane. The protein localises to the cytoplasmic vesicle. The protein resides in the COPI-coated vesicle membrane. Its subcellular location is the endoplasmic reticulum membrane. It is found in the endoplasmic reticulum-Golgi intermediate compartment membrane. Its function is as follows. Receptor for the C-terminal sequence motif K-D-E-L that is present on endoplasmic reticulum resident proteins and that mediates their recycling from the Golgi back to the endoplasmic reticulum. The sequence is that of ER lumen protein-retaining receptor 1 (Kdelr1) from Rattus norvegicus (Rat).